Reading from the N-terminus, the 143-residue chain is Pre-mRNA-splicing factor U5-Cwc21 (143 aa).

A CWF21 domain is found at 27-70 (EHHRSLRAIKLKVLLYREEREAAGVPPDVISRECATLHGSLLRN).

Belongs to the CWC21 family. Associates with the NTC complex (or PRP19-associated complex). The NTC complex associates with the spliceosome after the release of the U1 and U4 snRNAs and forms the CWC spliceosome subcomplex reminiscent of a late-stage spliceosome. Associates specifically with U5-containing snRNPs.

It localises to the cytoplasm. The protein resides in the nucleus. Essential protein involved in pre-mRNA cis- and trans-splicing. May function at or prior to the first catalytic step of splicing at the catalytic center of the spliceosome. May do so by stabilizing the catalytic center or the position of the RNA substrate. The protein is Pre-mRNA-splicing factor U5-Cwc21 of Trypanosoma brucei brucei (strain 927/4 GUTat10.1).